The following is a 32-amino-acid chain: Photosystem II reaction center protein T (32 aa).

The helical transmembrane segment at 3–23 threads the bilayer; that stretch reads ALVYTFLLIGTLMVIFFAVFF.

Belongs to the PsbT family. In terms of assembly, PSII is composed of 1 copy each of membrane proteins PsbA, PsbB, PsbC, PsbD, PsbE, PsbF, PsbH, PsbI, PsbJ, PsbK, PsbL, PsbM, PsbT, PsbX, PsbY, PsbZ, Psb30/Ycf12, at least 3 peripheral proteins of the oxygen-evolving complex and a large number of cofactors. It forms dimeric complexes.

Its subcellular location is the plastid. The protein resides in the chloroplast thylakoid membrane. Its function is as follows. Found at the monomer-monomer interface of the photosystem II (PS II) dimer, plays a role in assembly and dimerization of PSII. PSII is a light-driven water plastoquinone oxidoreductase, using light energy to abstract electrons from H(2)O, generating a proton gradient subsequently used for ATP formation. This chain is Photosystem II reaction center protein T, found in Thalassiosira pseudonana (Marine diatom).